A 286-amino-acid chain; its full sequence is Polyamine aminopropyltransferase (286 aa).

Positions 9–242 constitute a PABS domain; the sequence is NGWIDEHHQG…GWWSWTFAAI (234 aa). Gln-36 provides a ligand contact to S-methyl-5'-thioadenosine. 2 residues coordinate spermidine: His-67 and Asp-91. S-methyl-5'-thioadenosine is bound by residues Glu-111 and 143 to 144; that span reads NG. Asp-162 acts as the Proton acceptor in catalysis. S-methyl-5'-thioadenosine is bound at residue Pro-169.

The protein belongs to the spermidine/spermine synthase family. As to quaternary structure, homodimer or homotetramer.

Its subcellular location is the cytoplasm. It carries out the reaction S-adenosyl 3-(methylsulfanyl)propylamine + putrescine = S-methyl-5'-thioadenosine + spermidine + H(+). The protein operates within amine and polyamine biosynthesis; spermidine biosynthesis; spermidine from putrescine: step 1/1. Catalyzes the irreversible transfer of a propylamine group from the amino donor S-adenosylmethioninamine (decarboxy-AdoMet) to putrescine (1,4-diaminobutane) to yield spermidine. The protein is Polyamine aminopropyltransferase of Prochlorococcus marinus (strain MIT 9313).